The primary structure comprises 138 residues: Ribosomal RNA large subunit methyltransferase H (138 aa).

S-adenosyl-L-methionine contacts are provided by residues leucine 57, glycine 86, and 105–110 (LSPLTF).

The protein belongs to the RNA methyltransferase RlmH family. In terms of assembly, homodimer.

It localises to the cytoplasm. The catalysed reaction is pseudouridine(1915) in 23S rRNA + S-adenosyl-L-methionine = N(3)-methylpseudouridine(1915) in 23S rRNA + S-adenosyl-L-homocysteine + H(+). Functionally, specifically methylates the pseudouridine at position 1915 (m3Psi1915) in 23S rRNA. This Prochlorococcus marinus (strain MIT 9312) protein is Ribosomal RNA large subunit methyltransferase H.